We begin with the raw amino-acid sequence, 758 residues long: Probable adenosylcobalamin-dependent ribonucleoside-triphosphate reductase (758 aa).

Cysteines 194 and 459 form a disulfide. The disordered stretch occupies residues 233-256 (IIIKGQLPPPPPQQQPQQQQQQHG). Catalysis depends on residues Cys448 and Glu450.

This sequence belongs to the class II ribonucleoside-triphosphate reductase family. In terms of assembly, monomer. Adenosylcob(III)alamin is required as a cofactor.

The catalysed reaction is a 2'-deoxyribonucleoside 5'-triphosphate + [thioredoxin]-disulfide + H2O = a ribonucleoside 5'-triphosphate + [thioredoxin]-dithiol. The chain is Probable adenosylcobalamin-dependent ribonucleoside-triphosphate reductase (rtpR) from Dictyostelium discoideum (Social amoeba).